Consider the following 226-residue polypeptide: Ornithine decarboxylase antizyme (226 aa).

The protein belongs to the ODC antizyme family. In terms of assembly, interacts with ODC and thereby sterically blocks ODC homodimerization.

Ornithine decarboxylase (ODC) antizyme protein that negatively regulates ODC activity and intracellular polyamine biosynthesis in response to increased intracellular polyamine levels. Binds to ODC monomers, inhibiting the assembly of the functional ODC homodimer, and targets the monomers for ubiquitin-independent proteolytic destruction by the 26S proteasome. This chain is Ornithine decarboxylase antizyme (spa1), found in Schizosaccharomyces pombe (strain 972 / ATCC 24843) (Fission yeast).